Here is a 427-residue protein sequence, read N- to C-terminus: MSQQEVCPLNLFQSAQGTGRVCMRVCVCERGRELAVLYRAAMGNAQKKGPGYREGGGPNSQPGTPGRRRSHGLNNAANSKEVPGSSPAANGSLPAGKSQDEPQGPGSAGESCNLDAPCGALPPPLARLKNQGNMLFKNGQFGDALEKYTQAIDGCIEAGIDSPEDLCVLYSNRAACFLKDGNSADCIQDCTRALELHPFSLKPLLRRAMAYESLERYRKAYVDYKTVLQIDISVQAAHDSVHRITKMLIEQDGPDWREKLPEIPAVPLSAQQHRKEEPSAELLQARAERAEQEKARKAEARFTILKQEGNELVKNSQFQGASEKYSECLAIKPNECAIYTNRALCFLKLERFAEAKQDCDSALQMEPKNKKAFYRRALAHKGLKDYLSASTDLQEVLQLDPNVQEAEQELEMVTNLLRESLLANAQG.

Positions 46–113 (QKKGPGYREG…GPGSAGESCN (68 aa)) are disordered. TPR repeat units follow at residues 125–158 (LARL…CIEA), 167–200 (CVLY…HPFS), 202–234 (KPLL…DISV), 302–335 (FTIL…KPNE), 336–369 (CAIY…EPKN), and 371–403 (KAFY…DPNV).

Its subcellular location is the cytoplasm. It localises to the dynein axonemal particle. Functionally, may play a role in the cytoplasmic assembly and/or trafficking of the axonemal dynein arms. The polypeptide is Sperm-associated antigen 1A (spag1a) (Danio rerio (Zebrafish)).